The sequence spans 95 residues: Large ribosomal subunit protein bL27 (95 aa).

Residues 1-8 (MEMNLQFF) constitute a propeptide that is removed on maturation. Residues 1-34 (MEMNLQFFSHHKGGGSTSNGRDSAGRRLGTKRAD) are disordered.

Belongs to the bacterial ribosomal protein bL27 family. The N-terminus is cleaved by ribosomal processing cysteine protease Prp.

This chain is Large ribosomal subunit protein bL27, found in Pediococcus pentosaceus (strain ATCC 25745 / CCUG 21536 / LMG 10740 / 183-1w).